A 258-amino-acid chain; its full sequence is Ubiquinone/menaquinone biosynthesis C-methyltransferase UbiE (258 aa).

Residues threonine 81, aspartate 102, and 130–131 (NA) each bind S-adenosyl-L-methionine.

It belongs to the class I-like SAM-binding methyltransferase superfamily. MenG/UbiE family.

The catalysed reaction is a 2-demethylmenaquinol + S-adenosyl-L-methionine = a menaquinol + S-adenosyl-L-homocysteine + H(+). It carries out the reaction a 2-methoxy-6-(all-trans-polyprenyl)benzene-1,4-diol + S-adenosyl-L-methionine = a 5-methoxy-2-methyl-3-(all-trans-polyprenyl)benzene-1,4-diol + S-adenosyl-L-homocysteine + H(+). Its pathway is quinol/quinone metabolism; menaquinone biosynthesis; menaquinol from 1,4-dihydroxy-2-naphthoate: step 2/2. It functions in the pathway cofactor biosynthesis; ubiquinone biosynthesis. Its function is as follows. Methyltransferase required for the conversion of demethylmenaquinol (DMKH2) to menaquinol (MKH2) and the conversion of 2-polyprenyl-6-methoxy-1,4-benzoquinol (DDMQH2) to 2-polyprenyl-3-methyl-6-methoxy-1,4-benzoquinol (DMQH2). In Rhizobium meliloti (strain 1021) (Ensifer meliloti), this protein is Ubiquinone/menaquinone biosynthesis C-methyltransferase UbiE.